Here is a 1477-residue protein sequence, read N- to C-terminus: FHA domain-containing protein PS1 (1477 aa).

The 52-residue stretch at L64 to I115 folds into the FHA domain. Disordered stretches follow at residues E188–T218, L588–F644, P789–F818, L832–S911, A942–V979, I1004–L1030, and V1159–S1225. The span at G589–Q607 shows a compositional bias: basic and acidic residues. The span at L832–P849 shows a compositional bias: polar residues. Low complexity predominate over residues Q870–E883. Composition is skewed to polar residues over residues N885–I897, L957–E971, N1007–R1018, and S1198–A1212. A compositionally biased stretch (low complexity) spans S1213–S1225.

Required for normal spindle orientation at male meiosis II and normal formation of tetrad of microspores. Not involved in female meiosis. The protein is FHA domain-containing protein PS1 of Arabidopsis thaliana (Mouse-ear cress).